Here is a 387-residue protein sequence, read N- to C-terminus: Succinate--CoA ligase [ADP-forming] subunit beta (387 aa).

Positions 9 to 245 constitute an ATP-grasp domain; sequence KDLLESYGLK…KSQENAKELK (237 aa). Residues Lys-46, 53 to 55, Glu-100, Tyr-103, and Glu-108 each bind ATP; that span reads GRG. Residues Asn-200 and Asp-214 each coordinate Mg(2+). Substrate-binding positions include Asn-265 and 322–324; that span reads GIV.

The protein belongs to the succinate/malate CoA ligase beta subunit family. Heterotetramer of two alpha and two beta subunits. The cofactor is Mg(2+).

The catalysed reaction is succinate + ATP + CoA = succinyl-CoA + ADP + phosphate. It carries out the reaction GTP + succinate + CoA = succinyl-CoA + GDP + phosphate. It participates in carbohydrate metabolism; tricarboxylic acid cycle; succinate from succinyl-CoA (ligase route): step 1/1. Functionally, succinyl-CoA synthetase functions in the citric acid cycle (TCA), coupling the hydrolysis of succinyl-CoA to the synthesis of either ATP or GTP and thus represents the only step of substrate-level phosphorylation in the TCA. The beta subunit provides nucleotide specificity of the enzyme and binds the substrate succinate, while the binding sites for coenzyme A and phosphate are found in the alpha subunit. The sequence is that of Succinate--CoA ligase [ADP-forming] subunit beta from Francisella tularensis subsp. holarctica (strain OSU18).